The following is an 862-amino-acid chain: Chaperone protein ClpB 1 (862 aa).

A Clp R domain is found at 5–147 (AEQFTEQAWA…KEAITAVRGN (143 aa)). 2 repeat regions span residues 8–72 (FTEQ…LQRL) and 84–147 (LGRS…VRGN). The NBD1 stretch occupies residues 160 to 341 (ESLAKYGRDL…RRFQQVLVDQ (182 aa)). 207–214 (GEPGVGKT) lines the ATP pocket. Residues 342–550 (PTVPDTISIL…IAEVIAKWTG (209 aa)) are linker. The stretch at 392–526 (IDLVDESAAR…QEDLLEDEDG (135 aa)) forms a coiled coil. The NBD2 stretch occupies residues 560–771 (EMEKLLQLED…RLDDQIIFRS (212 aa)). Residue 610-617 (GPTGVGKT) coordinates ATP. Residues 772 to 862 (LEKEELRRIV…DAGDDKLSIS (91 aa)) are C-terminal.

This sequence belongs to the ClpA/ClpB family. In terms of assembly, homohexamer. The oligomerization is ATP-dependent.

The protein localises to the cytoplasm. Functionally, part of a stress-induced multi-chaperone system, it is involved in the recovery of the cell from heat-induced damage, in cooperation with DnaK, DnaJ and GrpE. Acts before DnaK, in the processing of protein aggregates. Protein binding stimulates the ATPase activity; ATP hydrolysis unfolds the denatured protein aggregates, which probably helps expose new hydrophobic binding sites on the surface of ClpB-bound aggregates, contributing to the solubilization and refolding of denatured protein aggregates by DnaK. In Parasynechococcus marenigrum (strain WH8102), this protein is Chaperone protein ClpB 1 (clpB1).